Consider the following 363-residue polypeptide: Exopolygalacturonase rpg13 (363 aa).

The first 26 residues, 1–26, serve as a signal peptide directing secretion; that stretch reads MVKFLSLTSSVTALLLLSLGANGVAA. 3 N-linked (GlcNAc...) asparagine glycosylation sites follow: Asn-121, Asn-142, and Asn-150. PbH1 repeat units follow at residues 143 to 173, 174 to 195, 197 to 217, 227 to 248, and 256 to 277; these read ATDVLINNITLHTASTSSLRPKNTDALDVSR, SSNVVFQNSKLTVGDDCLAINE, VTNVTLSKITCNGGHGFSVGS, VKTVRIHDSVCNDCQNGVRIKT, and VSDIKFNNVELNNVENPILITT. Asp-188 (proton donor) is an active-site residue. A disulfide bridge connects residues Cys-190 and Cys-207. Asn-199 carries N-linked (GlcNAc...) asparagine glycosylation. The active site involves His-211. A glycan (N-linked (GlcNAc...) asparagine) is linked at Asn-321. Residues Cys-322 and Cys-328 are joined by a disulfide bond. The stretch at 328–354 is one PbH1 6 repeat; it reads CTDFTLSGVKITKASNTPKNVCVNLDG.

The protein belongs to the glycosyl hydrolase 28 family. Post-translationally, N-glycosylated.

Its subcellular location is the secreted. It carries out the reaction [(1-&gt;4)-alpha-D-galacturonosyl](n) + H2O = alpha-D-galacturonate + [(1-&gt;4)-alpha-D-galacturonosyl](n-1). Its function is as follows. Specific in hydrolyzing the terminal glycosidic bond of polygalacturonic acid and oligogalacturonates. Has no activity towards trigalacturonic acid. This is Exopolygalacturonase rpg13 from Rhizopus delemar (strain RA 99-880 / ATCC MYA-4621 / FGSC 9543 / NRRL 43880) (Mucormycosis agent).